The chain runs to 313 residues: Protein FixB (313 aa).

255 to 283 (LYLAVGISGQIQHMVGANASQTIFAINKD) serves as a coordination point for FAD.

The protein belongs to the ETF alpha-subunit/FixB family. In terms of assembly, heterodimer of FixA and FixB.

Its pathway is amine and polyamine metabolism; carnitine metabolism. Functionally, required for anaerobic carnitine reduction. May bring reductant to CaiA. This is Protein FixB from Shigella flexneri.